The following is a 302-amino-acid chain: Pyridoxal 5'-phosphate synthase subunit PdxS (302 aa).

Asp32 contacts D-ribose 5-phosphate. The active-site Schiff-base intermediate with D-ribose 5-phosphate is the Lys89. Gly161 is a binding site for D-ribose 5-phosphate. D-glyceraldehyde 3-phosphate is bound at residue Arg173. D-ribose 5-phosphate contacts are provided by residues Gly222 and 243-244 (GS). Residues 278–302 (GIGKGMKGQSNEDLPDEEKLQGRGV) form a disordered region.

Belongs to the PdxS/SNZ family. In the presence of PdxT, forms a dodecamer of heterodimers.

It carries out the reaction aldehydo-D-ribose 5-phosphate + D-glyceraldehyde 3-phosphate + L-glutamine = pyridoxal 5'-phosphate + L-glutamate + phosphate + 3 H2O + H(+). Its pathway is cofactor biosynthesis; pyridoxal 5'-phosphate biosynthesis. Catalyzes the formation of pyridoxal 5'-phosphate from ribose 5-phosphate (RBP), glyceraldehyde 3-phosphate (G3P) and ammonia. The ammonia is provided by the PdxT subunit. Can also use ribulose 5-phosphate and dihydroxyacetone phosphate as substrates, resulting from enzyme-catalyzed isomerization of RBP and G3P, respectively. The polypeptide is Pyridoxal 5'-phosphate synthase subunit PdxS (Halorubrum lacusprofundi (strain ATCC 49239 / DSM 5036 / JCM 8891 / ACAM 34)).